The chain runs to 151 residues: Large ribosomal subunit protein uL16 (151 aa).

Belongs to the universal ribosomal protein uL16 family. In terms of assembly, part of the 50S ribosomal subunit.

Functionally, binds 23S rRNA and is also seen to make contacts with the A and possibly P site tRNAs. The polypeptide is Large ribosomal subunit protein uL16 (Chloroflexus aurantiacus (strain ATCC 29364 / DSM 637 / Y-400-fl)).